A 283-amino-acid chain; its full sequence is MANLKALFLRMKSVKSIQKTTKVMQMISAAKLRQVQQRLNNARMHMLELSKIIDTNVVSKNNECTDRHNKKDILLVIMSSDRGLCGNFNNMIVKFAKSYIEELESCGKNVKLLFFGKVAYNMMCSQYSSKILDVFSNIQSITDFLSFKLFLYGSGVDFNQFIDVMVLFNKFYTTILQKPTVEQLMPCNIDISVSLKEYYKYEPAYLNVLSTMSLSYILNLMYIAFLENCASEHSSRVIAMESANNNTKEMLSKLVLQYNRSRQAAITTDLIEVISGFESLGNQ.

It belongs to the ATPase gamma chain family. In terms of assembly, F-type ATPases have 2 components, CF(1) - the catalytic core - and CF(0) - the membrane proton channel. CF(1) has five subunits: alpha(3), beta(3), gamma(1), delta(1), epsilon(1). CF(0) has three main subunits: a, b and c.

It localises to the cell inner membrane. Functionally, produces ATP from ADP in the presence of a proton gradient across the membrane. The gamma chain is believed to be important in regulating ATPase activity and the flow of protons through the CF(0) complex. The polypeptide is ATP synthase gamma chain (Ehrlichia ruminantium (strain Gardel)).